Reading from the N-terminus, the 360-residue chain is D-alanine--D-alanine ligase (360 aa).

The region spanning 146 to 352 (KLCVADAGIA…FPELAERLLQ (207 aa)) is the ATP-grasp domain. 179 to 234 (EEKFIYPFFVKPANLGSSIGISKVHHREQLPAALKSACSLDSKIVVEKAITGREIE) provides a ligand contact to ATP. D305, E319, and N321 together coordinate Mg(2+).

The protein belongs to the D-alanine--D-alanine ligase family. It depends on Mg(2+) as a cofactor. Requires Mn(2+) as cofactor.

The protein localises to the cytoplasm. It carries out the reaction 2 D-alanine + ATP = D-alanyl-D-alanine + ADP + phosphate + H(+). It functions in the pathway cell wall biogenesis; peptidoglycan biosynthesis. Functionally, cell wall formation. The chain is D-alanine--D-alanine ligase from Pelodictyon phaeoclathratiforme (strain DSM 5477 / BU-1).